We begin with the raw amino-acid sequence, 189 residues long: Peptidyl-tRNA hydrolase (189 aa).

Position 15 (H15) interacts with tRNA. Residue H20 is the Proton acceptor of the active site. The tRNA site is built by F66, N68, and N114.

Belongs to the PTH family. In terms of assembly, monomer.

Its subcellular location is the cytoplasm. It carries out the reaction an N-acyl-L-alpha-aminoacyl-tRNA + H2O = an N-acyl-L-amino acid + a tRNA + H(+). Hydrolyzes ribosome-free peptidyl-tRNAs (with 1 or more amino acids incorporated), which drop off the ribosome during protein synthesis, or as a result of ribosome stalling. Its function is as follows. Catalyzes the release of premature peptidyl moieties from peptidyl-tRNA molecules trapped in stalled 50S ribosomal subunits, and thus maintains levels of free tRNAs and 50S ribosomes. The polypeptide is Peptidyl-tRNA hydrolase (Streptococcus equi subsp. equi (strain 4047)).